Reading from the N-terminus, the 206-residue chain is Large ribosomal subunit protein uL13w (206 aa).

It belongs to the universal ribosomal protein uL13 family.

The polypeptide is Large ribosomal subunit protein uL13w (RPL13AD) (Arabidopsis thaliana (Mouse-ear cress)).